Here is a 938-residue protein sequence, read N- to C-terminus: MSDYKSTLNLPETGFPMRGDLAKREPGMLARWTDDDLYGIIRAAKKGKKTFILHDGPPYANGSIHIGHSVNKILKDIIVKSKGLTGYDSPYVPGWDCHGLPIELKVEQQYGKPGEKFTAAEFRSKCREYAAEQIDGQRKDFIRLGVLGDWSRPYLTMDFKTEANIIRALGKIIGNGHLHKGAKPVHWCVDCRSALAEAEVEYYDKTSPSIDVAFHAVDKAAVLAKFGVADVNGPVSLVIWTTTPWTLPANRAISLSPEFDYALVQVDGQALILAKDLVESVMKRVGATDYTILAAVQGSELELMRFKHPFLDFDVPAILGDHVTLDAGTGAVHTAGGHGPDDYTISQKYGLEIANPVGPDGAYLPGTYPSLDGINVFKANDIIVEMLRDSGALLHVEKMQHSYPCCWRHKSPIIFRATPQWFVSMDQKGLRAQSLKEIKGVQWIPDWGQARIESMVANRPDWCISRQRTWGVPMSLFVHKETHELHPRTLELMEEVAKRVEVDGIQAWWDLDSRDILGDDADSYEKVPDTLDVWFDSGSTHSSVVDVRPEFAGHAADMYLEGSDQHRGWFMSSLMISTAMKGKAPYRQVLTHGFTVDGQGRKMSKSIGNTVSPQDVMNKLGADILRLWVASTDYTGEMAVSDEILKRAADSYRRIRNTARFLLANLNGFDPAKDMVKPEEMVVLDRWAVGCAQAAQEDILKAYESYDFHEVVQRLMRFCSIEMGSFYLDIIKDRQYTAKADSVARRSCQTALFHIVEALVRWMAPIMSFTADEIWGYLPGDREKYVFTGEWYKGLFGLADDEAMNDGFWDELLKVRGEVNKVIEQARADKKVGGSLEAAVTLYADADLAAKLNALGDELRFVLLTSGANVADYAQAPADAWQSDLLKGLKVVLSKAEGEKCPRCWHYTSDVGKVAEHAEICGRCVSNVAGNGEQRKFA.

The short motif at 58 to 68 (PYANGSIHIGH) is the 'HIGH' region element. Residue Glu-561 participates in L-isoleucyl-5'-AMP binding. The short motif at 602 to 606 (KMSKS) is the 'KMSKS' region element. Position 605 (Lys-605) interacts with ATP. Residues Cys-901, Cys-904, Cys-921, and Cys-924 each coordinate Zn(2+).

This sequence belongs to the class-I aminoacyl-tRNA synthetase family. IleS type 1 subfamily. As to quaternary structure, monomer. Zn(2+) serves as cofactor.

Its subcellular location is the cytoplasm. The catalysed reaction is tRNA(Ile) + L-isoleucine + ATP = L-isoleucyl-tRNA(Ile) + AMP + diphosphate. In terms of biological role, catalyzes the attachment of isoleucine to tRNA(Ile). As IleRS can inadvertently accommodate and process structurally similar amino acids such as valine, to avoid such errors it has two additional distinct tRNA(Ile)-dependent editing activities. One activity is designated as 'pretransfer' editing and involves the hydrolysis of activated Val-AMP. The other activity is designated 'posttransfer' editing and involves deacylation of mischarged Val-tRNA(Ile). The protein is Isoleucine--tRNA ligase of Klebsiella pneumoniae (strain 342).